We begin with the raw amino-acid sequence, 328 residues long: Cytochrome c biogenesis protein CcsA (328 aa).

8 helical membrane passes run 15–35, 37–57, 68–88, 97–117, 142–162, 236–256, 271–291, and 297–317; these read FLVLFLTMMIYWVGAAFPSVP, LQALGTAGVAIANLCIAALLG, ISNLYESLFFLAWGVTAAHLI, LVGVVTTPVAMGISAFAALTL, VMMLSYATLMVGSALAIAFLF, IIGLGFPLLTIGIIAGAVWAN, WALITWLVFAAYLHARITKGW, and AILAASGFVVVWVCYLGVNLL.

The protein belongs to the CcmF/CycK/Ccl1/NrfE/CcsA family. In terms of assembly, may interact with ccs1.

It localises to the cellular thylakoid membrane. Required during biogenesis of c-type cytochromes (cytochrome c6 and cytochrome f) at the step of heme attachment. This chain is Cytochrome c biogenesis protein CcsA, found in Gloeothece citriformis (strain PCC 7424) (Cyanothece sp. (strain PCC 7424)).